The sequence spans 267 residues: Tryptophan synthase alpha chain (267 aa).

Residues glutamate 47 and aspartate 58 each act as proton acceptor in the active site.

It belongs to the TrpA family. As to quaternary structure, tetramer of two alpha and two beta chains.

The catalysed reaction is (1S,2R)-1-C-(indol-3-yl)glycerol 3-phosphate + L-serine = D-glyceraldehyde 3-phosphate + L-tryptophan + H2O. Its pathway is amino-acid biosynthesis; L-tryptophan biosynthesis; L-tryptophan from chorismate: step 5/5. In terms of biological role, the alpha subunit is responsible for the aldol cleavage of indoleglycerol phosphate to indole and glyceraldehyde 3-phosphate. This Chlorobium phaeovibrioides (strain DSM 265 / 1930) (Prosthecochloris vibrioformis (strain DSM 265)) protein is Tryptophan synthase alpha chain.